We begin with the raw amino-acid sequence, 284 residues long: Tropomyosin isoforms a/b/d/f (284 aa).

Positions 1 to 284 form a coiled coil; that stretch reads MDAIKKKMQA…DSTFQELSGY (284 aa). A disordered region spans residues 40 to 78; the sequence is EEELRDTQKKMTQTGDDLDKAQEDLSAATSKLEEKEKTV.

Belongs to the tropomyosin family. As to expression, isoform a and isoform d are expressed in body wall muscles, vulva, anus muscles and male tail muscles. Located to the myofibrils of thin actin filaments.

The protein resides in the cytoplasm. Its subcellular location is the myofibril. The protein localises to the sarcomere. It localises to the i band. Functionally, tropomyosin, in association with the troponin complex, plays a central role in the calcium dependent regulation of muscle contraction. Involved in muscle actin filament organization and muscle arm extension and morphology. Protects actin filaments from depolymerization by unc-60 in vitro. Also has a role in male mating behavior by regulating the copulatory spicules. Binds to F-actin. In Caenorhabditis elegans, this protein is Tropomyosin isoforms a/b/d/f (lev-11).